The primary structure comprises 85 residues: U4-theraphotoxin-Hhn1w (85 aa).

An N-terminal signal peptide occupies residues 1–22; it reads MKVTLIAILTCAAVLALHTTAA. A propeptide spanning residues 23–48 is cleaved from the precursor; sequence EELEAESQLMEVGMPDTELAAVDEER. Disulfide bonds link C52–C66, C56–C77, and C71–C82.

Belongs to the neurotoxin 12 (Hwtx-2) family. 02 (Hwtx-2) subfamily. Expressed by the venom gland.

The protein localises to the secreted. Its function is as follows. Postsynaptic neurotoxin. This chain is U4-theraphotoxin-Hhn1w, found in Cyriopagopus hainanus (Chinese bird spider).